The following is a 624-amino-acid chain: DNA mismatch repair protein MutL (624 aa).

Residues 416–436 are disordered; the sequence is LTPSVDQPDTGDGENPVAPEK.

Belongs to the DNA mismatch repair MutL/HexB family.

This protein is involved in the repair of mismatches in DNA. It is required for dam-dependent methyl-directed DNA mismatch repair. May act as a 'molecular matchmaker', a protein that promotes the formation of a stable complex between two or more DNA-binding proteins in an ATP-dependent manner without itself being part of a final effector complex. The chain is DNA mismatch repair protein MutL from Chlorobaculum tepidum (strain ATCC 49652 / DSM 12025 / NBRC 103806 / TLS) (Chlorobium tepidum).